The sequence spans 189 residues: Copper transport protein CTR2 (189 aa).

Residues 1 to 81 (MDDKKTWSTV…VVFEWWHIKT (81 aa)) lie on the Cytoplasmic side of the membrane. The helical transmembrane segment at 82–102 (LPGLILSCLAIFGLAYLYEYL) threads the bilayer. Over 103-142 (KYCVHKRQLSQRVLLPNRSLTKINQADKVSNSILYGLQVG) the chain is Vacuolar. Residues 143 to 163 (FSFMLMLVFMTYNGWLMLAVV) traverse the membrane as a helical segment. Residues 164–189 (CGAIWGNYSWCTSYSPEIDDSSLACH) are Cytoplasmic-facing.

The protein belongs to the copper transporter (Ctr) (TC 1.A.56) family. SLC31A subfamily. Homomultimer.

The protein localises to the vacuole membrane. Functionally, provides bioavailable copper via mobilization of vacuolar copper stores and export to the cytoplasm. The chain is Copper transport protein CTR2 (CTR2) from Saccharomyces cerevisiae (strain ATCC 204508 / S288c) (Baker's yeast).